A 145-amino-acid chain; its full sequence is Photosystem I reaction center subunit XI (145 aa).

Helical transmembrane passes span 48 to 68, 75 to 95, and 125 to 145; these read LEIG…LGPL, LLVG…ALTI, and IGAL…SFFA.

Belongs to the PsaL family.

The protein resides in the plastid. It is found in the chloroplast thylakoid membrane. This is Photosystem I reaction center subunit XI from Isochrysis galbana (Marine planktonic alga).